The sequence spans 203 residues: Holliday junction branch migration complex subunit RuvA (203 aa).

The interval 1–63 is domain I; sequence MIGKLSGKVD…EEHMHLYGFL (63 aa). The segment at 64–142 is domain II; that stretch reads TLEEKIFFNL…KISSGSAIIK (79 aa). Residues 143-149 form a flexible linker region; that stretch reads ESLNIKN. A domain III region spans residues 150 to 203; sequence ITPVASNEVIKALVNLGFSRFEAQNAVQGIITQNPEISIDELIKTALKNRNSNF.

The protein belongs to the RuvA family. Homotetramer. Forms an RuvA(8)-RuvB(12)-Holliday junction (HJ) complex. HJ DNA is sandwiched between 2 RuvA tetramers; dsDNA enters through RuvA and exits via RuvB. An RuvB hexamer assembles on each DNA strand where it exits the tetramer. Each RuvB hexamer is contacted by two RuvA subunits (via domain III) on 2 adjacent RuvB subunits; this complex drives branch migration. In the full resolvosome a probable DNA-RuvA(4)-RuvB(12)-RuvC(2) complex forms which resolves the HJ.

The protein localises to the cytoplasm. Its function is as follows. The RuvA-RuvB-RuvC complex processes Holliday junction (HJ) DNA during genetic recombination and DNA repair, while the RuvA-RuvB complex plays an important role in the rescue of blocked DNA replication forks via replication fork reversal (RFR). RuvA specifically binds to HJ cruciform DNA, conferring on it an open structure. The RuvB hexamer acts as an ATP-dependent pump, pulling dsDNA into and through the RuvAB complex. HJ branch migration allows RuvC to scan DNA until it finds its consensus sequence, where it cleaves and resolves the cruciform DNA. The protein is Holliday junction branch migration complex subunit RuvA of Rickettsia peacockii (strain Rustic).